Reading from the N-terminus, the 574-residue chain is PI-PLC X domain-containing protein DDB_G0269228 (574 aa).

Residues 1–42 form a disordered region; sequence MFSSIMFKKKPKQNLNENEITSQSTTTTSTLSDSKPSEKKIK. The span at 21–34 shows a compositional bias: low complexity; sequence TSQSTTTTSTLSDS. The PI-PLC X-box domain occupies 270–449; that stretch reads GIKSSSLRVP…LKKRIINDDG (180 aa).

This Dictyostelium discoideum (Social amoeba) protein is PI-PLC X domain-containing protein DDB_G0269228.